Consider the following 539-residue polypeptide: Protein lin-14 (539 aa).

2 disordered regions span residues 162–230 and 262–293; these read PTLP…SNHS and ETAP…PRKP. 2 stretches are compositionally biased toward polar residues: residues 163–183 and 193–214; these read TLPN…GTDD and SVDS…NQNI. The span at 274 to 284 shows a compositional bias: low complexity; sequence NGTTNGTAKAG. The tract at residues 296-440 is involved in sequence-specific DNA-binding; it reads DDIVKIVRNQ…CRRVRHAKKT (145 aa).

In terms of processing, cleaved by caspase ced-3 in vitro. As to expression, high levels in hypodermal, intestinal, body wall muscle, nerve ring, and ventral nerve cord cells of embryos and L1 animals.

The protein localises to the nucleus. Functionally, heterochronic protein which controls the choice of stage specific cell fates. Involved in the temporal progression of vulval fate patterning, possibly by inhibiting lin-12. Acts as a transcription factor involved in the stage-specific repression of various genes, including insulin/insulin-like growth factor gene ins-33 and neuropeptide-encoding gene nlp-45. Binds to the consensus sequence 5'-[CT]GGA[AG]-3' in the regulatory elements of target genes. Plays a role in governing the developmental timing of male tail tip morphogenesis. Plays a role in controlling the timing of seam cell development during the larval stages. Plays a role in promoting survival at high temperatures in larvae. Involved in maintenance of the architecture of the ventral nerve cord, perhaps acting via modulating expression of the immunoglobulin domain gene zig-4. In terms of biological role, may specify L2 and later cell fates, creating a temporal switch. May be involved in specifying L1 cell fates. The polypeptide is Protein lin-14 (Caenorhabditis elegans).